A 542-amino-acid chain; its full sequence is NAD-dependent deacetylase sir2D (542 aa).

Disordered regions lie at residues Met-1–Leu-37 and Glu-136–Thr-160. Over residues Asn-8–Lys-25 the composition is skewed to low complexity. Residues Asn-165–Asn-193 are a coiled coil. The 260-residue stretch at Ala-283 to Trp-542 folds into the Deacetylase sirtuin-type domain. His-411 serves as the catalytic Proton acceptor. Zn(2+) is bound by residues Cys-419, Cys-422, Cys-443, and Cys-446.

This sequence belongs to the sirtuin family. Zn(2+) serves as cofactor.

The enzyme catalyses N(6)-acetyl-L-lysyl-[protein] + NAD(+) + H2O = 2''-O-acetyl-ADP-D-ribose + nicotinamide + L-lysyl-[protein]. Its function is as follows. NAD-dependent deacetylase, which plays an important role in the regulation of transcriptional repression. This chain is NAD-dependent deacetylase sir2D (sir2D), found in Dictyostelium discoideum (Social amoeba).